The sequence spans 394 residues: Ketoisovalerate oxidoreductase subunit VorA (394 aa).

In terms of assembly, heterotetramer of one alpha, one beta, one delta and one gamma chain.

The catalysed reaction is 3-methyl-2-oxobutanoate + 2 oxidized [2Fe-2S]-[ferredoxin] + CoA = 2-methylpropanoyl-CoA + 2 reduced [2Fe-2S]-[ferredoxin] + CO2 + H(+). The chain is Ketoisovalerate oxidoreductase subunit VorA (vorA) from Pyrococcus horikoshii (strain ATCC 700860 / DSM 12428 / JCM 9974 / NBRC 100139 / OT-3).